The primary structure comprises 264 residues: MNASCAALWSLGSSRMATRAQFESSNEVGVFAKLTNSYCLVALGGSEHFYSTLEAELAPHIPVVHATVGGTRVIGRVCVGNRRGLIVPSITTDQELQHLRNSLPDSVEIRRVEERLSALGNNVACNDYVALLHTDMDKETEEIVQDVLGVEAFRATIGKQTLVGSYCHFTNQGGLVHVMTPVEDMEELSQLLQVPLTAGTVNRGSDLVGAGLIANDWAAFCGMDTTATELAVVERIFKIATRNQQKLNLVDDLTLRSSLIDTLS.

The protein belongs to the eIF-6 family. As to quaternary structure, monomer. Associates with the 60S ribosomal subunit.

The protein resides in the cytoplasm. Its subcellular location is the nucleus. The protein localises to the nucleolus. Its function is as follows. Binds to the 60S ribosomal subunit and prevents its association with the 40S ribosomal subunit to form the 80S initiation complex in the cytoplasm. May also be involved in ribosome biogenesis. The protein is Eukaryotic translation initiation factor 6 of Toxoplasma gondii (strain ATCC 50861 / VEG).